We begin with the raw amino-acid sequence, 275 residues long: Elongation factor Ts (275 aa).

The involved in Mg(2+) ion dislocation from EF-Tu stretch occupies residues 80–83; the sequence is TDFV.

The protein belongs to the EF-Ts family.

The protein resides in the cytoplasm. Associates with the EF-Tu.GDP complex and induces the exchange of GDP to GTP. It remains bound to the aminoacyl-tRNA.EF-Tu.GTP complex up to the GTP hydrolysis stage on the ribosome. This chain is Elongation factor Ts, found in Kineococcus radiotolerans (strain ATCC BAA-149 / DSM 14245 / SRS30216).